A 1152-amino-acid chain; its full sequence is Calcium-activated potassium channel subunit alpha-1 (1152 aa).

A disordered region spans residues 1 to 37; sequence MSSNIHANHLSLDASSSSSSSSSSSSSSSSSSSSVHE. Over 1 to 60 the chain is Extracellular; the sequence is MSSNIHANHLSLDASSSSSSSSSSSSSSSSSSSSVHEPKMDALIIPVTMEVPCDSRGQRM. Positions 15–34 are enriched in low complexity; that stretch reads SSSSSSSSSSSSSSSSSSSS. A helical transmembrane segment spans residues 61–81; sequence WWAFLASSMVTFFGGLFIILL. Topologically, residues 82–152 are cytoplasmic; that stretch reads WRTLKYLWTV…MISAQTLTGR (71 aa). 3 S-palmitoyl cysteine lipidation sites follow: cysteine 92, cysteine 93, and cysteine 95. The chain crosses the membrane as a helical span at residues 153–173; that stretch reads VLVVLVFALSIGALVIYFIDS. Residues 174 to 188 are Extracellular-facing; that stretch reads SNPIESCQNFYKDFT. A helical membrane pass occupies residues 189-209; the sequence is LQIDMAFNVFFLLYFGLRFIA. Residues 210 to 213 lie on the Cytoplasmic side of the membrane; that stretch reads ANDK. The helical transmembrane segment at 214-234 threads the bilayer; the sequence is LWFWLEVNSVVDFFTVPPVFV. The Extracellular portion of the chain corresponds to 235 to 238; that stretch reads SVYL. The chain crosses the membrane as a helical; Voltage-sensor span at residues 239 to 259; sequence NRSWLGLRFLRALRLIQFSEI. Over 260–274 the chain is Cytoplasmic; it reads LQFLNILKTSNSIKL. Residues 275–295 traverse the membrane as a helical segment; sequence VNLLSIFISTWLTAAGFIHLV. Topologically, residues 296 to 309 are extracellular; the sequence is ENSGDPWENFQNNQ. Residues 310-332 constitute an intramembrane region (pore-forming); it reads ALTYWECVYLLMVTMSTVGYGDV. The Selectivity for potassium signature appears at 326–329; the sequence is TVGY. Residues 333–341 lie on the Extracellular side of the membrane; sequence YAKTTLGRL. A helical membrane pass occupies residues 342–362; it reads FMVFFILGGLAMFASYVPEII. Residues 363–1152 lie on the Cytoplasmic side of the membrane; the sequence is ELIGNRKKYG…KQKYVQEERL (790 aa). In terms of domain architecture, RCK N-terminal 1 spans 381-523; that stretch reads RKHIVVCGHI…WNWKEGDDAI (143 aa). Mg(2+) is bound by residues glutamate 413, glutamine 436, and glutamate 438. The segment at 530–550 is segment S7; sequence LGFIAQSCLAQGLSTMLANLF. The segment at 587 to 607 is segment S8; that stretch reads LSFPTVCELCFVKLKLLMIAI. Residues 651-655 are heme-binding motif; it reads CKACH. A disordered region spans residues 675-703; the sequence is EQPSTLSPKKKQRNGGMRNSPSSSPKLMR. At threonine 679 the chain carries Phosphothreonine. Phosphoserine occurs at positions 681, 694, and 698. The tract at residues 753-773 is segment S9; the sequence is VLSGHVVVCIFGDVSSALIGL. An RCK N-terminal 2 domain is found at 755–899; that stretch reads SGHVVVCIFG…MDRSSPDNSP (145 aa). Threonine 886 is modified (phosphothreonine). 2 positions are modified to phosphoserine: serine 894 and serine 898. A Calcium bowl motif is present at residues 919 to 941; that stretch reads TELVNDTNVQFLDQDDDDDPDTE. Ca(2+) contacts are provided by glutamine 928, aspartate 931, aspartate 934, and aspartate 936. Positions 948–968 are segment S10; sequence FACGTAFAVSVLDSLMSATYF. Positions 1102–1127 are enriched in low complexity; the sequence is RASLSHSSHSSQSSSKKSSSVHSIPS. The disordered stretch occupies residues 1102 to 1152; sequence RASLSHSSHSSQSSSKKSSSVHSIPSTANRQNRPKSRESRDKQKYVQEERL. Positions 1136-1152 are enriched in basic and acidic residues; that stretch reads KSRESRDKQKYVQEERL. 2 positions are modified to phosphoserine: serine 1137 and serine 1140.

This sequence belongs to the potassium channel family. Calcium-activated (TC 1.A.1.3) subfamily. KCa1.1/KCNMA1 sub-subfamily. In terms of assembly, homotetramer; which constitutes the calcium-activated potassium channel. Interacts with beta subunits KCNMB1, KCNMB2, KCNMB3 and KCNMB4. Interacts with gamma subunits LRRC26, LRRC38, LRRC52 and LRRC55. Beta and gamma subunits are accessory, and modulate its activity. Interacts with RAB11B. In terms of processing, phosphorylated. Phosphorylation by kinases such as PKA and/or PKG. In smooth muscles, phosphorylation affects its activity. Post-translationally, palmitoylation by ZDHHC22 and ZDHHC23 within the intracellular linker between the S0 and S1 transmembrane domains regulates localization to the plasma membrane. Depalmitoylated by LYPLA1 and LYPLAL1, leading to retard exit from the trans-Golgi network.

The protein resides in the cell membrane. The catalysed reaction is K(+)(in) = K(+)(out). Ethanol and carbon monoxide-bound heme increase channel activation. Heme inhibits channel activation. Potassium channel activated by both membrane depolarization or increase in cytosolic Ca(2+) that mediates export of K(+). It is also activated by the concentration of cytosolic Mg(2+). Its activation dampens the excitatory events that elevate the cytosolic Ca(2+) concentration and/or depolarize the cell membrane. It therefore contributes to repolarization of the membrane potential. Plays a key role in controlling excitability in a number of systems, such as regulation of the contraction of smooth muscle, the tuning of hair cells in the cochlea, regulation of transmitter release, and innate immunity. In smooth muscles, its activation by high level of Ca(2+), caused by ryanodine receptors in the sarcoplasmic reticulum, regulates the membrane potential. In cochlea cells, its number and kinetic properties partly determine the characteristic frequency of each hair cell and thereby helps to establish a tonotopic map. Kinetics of KCNMA1 channels are determined by alternative splicing, phosphorylation status and its combination with modulating beta subunits. Highly sensitive to both iberiotoxin (IbTx) and charybdotoxin (CTX). The protein is Calcium-activated potassium channel subunit alpha-1 (KCNMA1) of Sus scrofa (Pig).